Consider the following 178-residue polypeptide: Adenine phosphoribosyltransferase (178 aa).

The protein belongs to the purine/pyrimidine phosphoribosyltransferase family. As to quaternary structure, homodimer.

It localises to the cytoplasm. It carries out the reaction AMP + diphosphate = 5-phospho-alpha-D-ribose 1-diphosphate + adenine. The protein operates within purine metabolism; AMP biosynthesis via salvage pathway; AMP from adenine: step 1/1. In terms of biological role, catalyzes a salvage reaction resulting in the formation of AMP, that is energically less costly than de novo synthesis. The polypeptide is Adenine phosphoribosyltransferase (Streptomyces clavuligerus).